Consider the following 156-residue polypeptide: MLNRTILVGRLTRDPELRTTQSGVNVASFTLAVNRTFTNAQGEREADFINIIVFKKQAENVNKYLSKGSLAGVDGRLQTRNYENKEGQRVYVTEVVADSIQFLEPKNTDDNQQDLYQQQAQQTRGQSQYSNNKPVKDNPFANANCPIEIDDNDLPF.

An SSB domain is found at Met-1–Glu-104. Residues Gln-122 to Pro-146 form a disordered region.

In terms of assembly, homotetramer.

This Staphylococcus aureus (strain MSSA476) protein is Single-stranded DNA-binding protein 1 (ssb1).